We begin with the raw amino-acid sequence, 53 residues long: Conotoxin-like peptide 1 (53 aa).

The N-terminal stretch at 1 to 18 is a signal peptide; it reads MGVKSALFIMAVFAAANV. Intrachain disulfides connect cysteine 25–cysteine 39, cysteine 32–cysteine 43, and cysteine 38–cysteine 50.

It localises to the secreted. In Orgyia pseudotsugata multicapsid polyhedrosis virus (OpMNPV), this protein is Conotoxin-like peptide 1 (CTL-1).